Reading from the N-terminus, the 339-residue chain is MKFDQKGLKKQSMTVAYFFDNINNDLDIKLRRLNEVDEQKRRITDRDLHRPGLALAGFTNLFTYKRVQILGNTEMRFLNHLDDKTRKMAFENIVKYKVPCIIITSNNKLDPALLDMATEAGIPAFITRNSSTRTIFLITDFLVDRFSVYQQYHGSMVDVYGVGVMLVGKSGLGKSEVALDLVERGHRLVADDAVVINRKGEKTLIASGNHVIGHFMEIRGLGVVDVKAAFGIRAIREKKVVQVVVELMEWNEDMDYERLGLDTKTTKILGVEVPLIQLPINPGKNITVIIEVVALNYLLKQYSGYVAAEALEERIKTSIDDEAMMTTRFGSNYLTKDYE.

Active-site residues include histidine 153 and lysine 174. An ATP-binding site is contributed by glycine 168 to serine 175. A Mg(2+)-binding site is contributed by serine 175. The active-site Proton acceptor; for phosphorylation activity. Proton donor; for dephosphorylation activity is the aspartate 192. Residues methionine 216 to aspartate 225 are important for the catalytic mechanism of both phosphorylation and dephosphorylation. A Mg(2+)-binding site is contributed by glutamate 217. Residue arginine 258 is part of the active site. Positions proline 279–lysine 284 are important for the catalytic mechanism of dephosphorylation.

The protein belongs to the HPrK/P family. In terms of assembly, homohexamer. Mg(2+) serves as cofactor.

It catalyses the reaction [HPr protein]-L-serine + ATP = [HPr protein]-O-phospho-L-serine + ADP + H(+). It carries out the reaction [HPr protein]-O-phospho-L-serine + phosphate + H(+) = [HPr protein]-L-serine + diphosphate. Its function is as follows. Catalyzes the ATP- as well as the pyrophosphate-dependent phosphorylation of a specific serine residue in HPr, a phosphocarrier protein of the phosphoenolpyruvate-dependent sugar phosphotransferase system (PTS). HprK/P also catalyzes the pyrophosphate-producing, inorganic phosphate-dependent dephosphorylation (phosphorolysis) of seryl-phosphorylated HPr (P-Ser-HPr). This Chlorobium phaeobacteroides (strain BS1) protein is HPr kinase/phosphorylase.